A 487-amino-acid polypeptide reads, in one-letter code: Bifunctional protein HldE (487 aa).

The interval 1–326 is ribokinase; that stretch reads MERREVESFF…QEIVAEVGHG (326 aa). 205 to 208 contacts ATP; the sequence is NRKE. The active site involves D275. Residues 356 to 487 form a cytidylyltransferase region; it reads FTNGCFDLLH…RIIEKILSSY (132 aa).

In the N-terminal section; belongs to the carbohydrate kinase PfkB family. It in the C-terminal section; belongs to the cytidylyltransferase family. In terms of assembly, homodimer.

The enzyme catalyses D-glycero-beta-D-manno-heptose 7-phosphate + ATP = D-glycero-beta-D-manno-heptose 1,7-bisphosphate + ADP + H(+). It carries out the reaction D-glycero-beta-D-manno-heptose 1-phosphate + ATP + H(+) = ADP-D-glycero-beta-D-manno-heptose + diphosphate. The protein operates within nucleotide-sugar biosynthesis; ADP-L-glycero-beta-D-manno-heptose biosynthesis; ADP-L-glycero-beta-D-manno-heptose from D-glycero-beta-D-manno-heptose 7-phosphate: step 1/4. Its pathway is nucleotide-sugar biosynthesis; ADP-L-glycero-beta-D-manno-heptose biosynthesis; ADP-L-glycero-beta-D-manno-heptose from D-glycero-beta-D-manno-heptose 7-phosphate: step 3/4. Catalyzes the phosphorylation of D-glycero-D-manno-heptose 7-phosphate at the C-1 position to selectively form D-glycero-beta-D-manno-heptose-1,7-bisphosphate. Its function is as follows. Catalyzes the ADP transfer from ATP to D-glycero-beta-D-manno-heptose 1-phosphate, yielding ADP-D-glycero-beta-D-manno-heptose. This Citrifermentans bemidjiense (strain ATCC BAA-1014 / DSM 16622 / JCM 12645 / Bem) (Geobacter bemidjiensis) protein is Bifunctional protein HldE.